Consider the following 33-residue polypeptide: Fatty acid-binding protein, intestinal (33 aa).

This sequence belongs to the calycin superfamily. Fatty-acid binding protein (FABP) family. As to expression, intestine.

It is found in the cytoplasm. Functionally, FABPs are thought to play a role in the intracellular transport of long-chain fatty acids and their acyl-CoA esters. The sequence is that of Fatty acid-binding protein, intestinal (fabp2) from Rhamdia sapo (South American catfish).